The primary structure comprises 117 residues: Large ribosomal subunit protein uL18 (117 aa).

It belongs to the universal ribosomal protein uL18 family. In terms of assembly, part of the 50S ribosomal subunit; part of the 5S rRNA/L5/L18/L25 subcomplex. Contacts the 5S and 23S rRNAs.

In terms of biological role, this is one of the proteins that bind and probably mediate the attachment of the 5S RNA into the large ribosomal subunit, where it forms part of the central protuberance. The sequence is that of Large ribosomal subunit protein uL18 from Francisella tularensis subsp. novicida (strain U112).